We begin with the raw amino-acid sequence, 431 residues long: Aspartate--tRNA(Asp/Asn) ligase (431 aa).

E170 serves as a coordination point for L-aspartate. The segment at Q192–K195 is aspartate. R214 is a binding site for L-aspartate. ATP is bound by residues R214–E216, R222–L224, and E354. 2 residues coordinate Mg(2+): E354 and S357. Residues S357 and R361 each coordinate L-aspartate. G402 to R405 provides a ligand contact to ATP.

The protein belongs to the class-II aminoacyl-tRNA synthetase family. Type 2 subfamily. Homodimer. Mg(2+) serves as cofactor.

Its subcellular location is the cytoplasm. It carries out the reaction tRNA(Asx) + L-aspartate + ATP = L-aspartyl-tRNA(Asx) + AMP + diphosphate. In terms of biological role, aspartyl-tRNA synthetase with relaxed tRNA specificity since it is able to aspartylate not only its cognate tRNA(Asp) but also tRNA(Asn). Reaction proceeds in two steps: L-aspartate is first activated by ATP to form Asp-AMP and then transferred to the acceptor end of tRNA(Asp/Asn). In Methanopyrus kandleri (strain AV19 / DSM 6324 / JCM 9639 / NBRC 100938), this protein is Aspartate--tRNA(Asp/Asn) ligase.